Here is a 323-residue protein sequence, read N- to C-terminus: tRNA dimethylallyltransferase (323 aa).

Position 12–19 (12–19 (GPTAAGKT)) interacts with ATP. A substrate-binding site is contributed by 14–19 (TAAGKT). 2 interaction with substrate tRNA regions span residues 37-40 (DSAL) and 161-165 (QRLIR).

It belongs to the IPP transferase family. Monomer. Mg(2+) is required as a cofactor.

It carries out the reaction adenosine(37) in tRNA + dimethylallyl diphosphate = N(6)-dimethylallyladenosine(37) in tRNA + diphosphate. In terms of biological role, catalyzes the transfer of a dimethylallyl group onto the adenine at position 37 in tRNAs that read codons beginning with uridine, leading to the formation of N6-(dimethylallyl)adenosine (i(6)A). The chain is tRNA dimethylallyltransferase from Pseudomonas putida (strain ATCC 47054 / DSM 6125 / CFBP 8728 / NCIMB 11950 / KT2440).